Consider the following 134-residue polypeptide: UPF0412 protein YaaI (134 aa).

A signal peptide spans 1–23; the sequence is MRSVLTISAGLLFGLALSSVAHA.

Belongs to the UPF0412 family.

In Salmonella agona (strain SL483), this protein is UPF0412 protein YaaI.